A 436-amino-acid chain; its full sequence is D-amino acid dehydrogenase (436 aa).

Residue 3 to 17 (IVVLGAGVVGVTSAY) coordinates FAD.

It belongs to the DadA oxidoreductase family. FAD serves as cofactor.

It carries out the reaction a D-alpha-amino acid + A + H2O = a 2-oxocarboxylate + AH2 + NH4(+). The protein operates within amino-acid degradation; D-alanine degradation; NH(3) and pyruvate from D-alanine: step 1/1. In terms of biological role, oxidative deamination of D-amino acids. This Cereibacter sphaeroides (strain ATCC 17029 / ATH 2.4.9) (Rhodobacter sphaeroides) protein is D-amino acid dehydrogenase.